Consider the following 352-residue polypeptide: Holliday junction branch migration complex subunit RuvB (352 aa).

The large ATPase domain (RuvB-L) stretch occupies residues 4–185; it reads ADRLIAATGP…FGIVQRLEFY (182 aa). Residues Ile24, Arg25, Gly66, Lys69, Thr70, Thr71, 132–134, Arg175, Tyr185, and Arg222 contribute to the ATP site; that span reads EDF. Thr70 serves as a coordination point for Mg(2+). Residues 186–256 form a small ATPAse domain (RuvB-S) region; it reads STADLATIVS…IADLALNLLD (71 aa). The interval 259 to 352 is head domain (RuvB-H); the sequence is ERGFDHQDRR…VDEFLDAVDD (94 aa). Residues Arg295, Arg314, and Arg319 each coordinate DNA.

The protein belongs to the RuvB family. In terms of assembly, homohexamer. Forms an RuvA(8)-RuvB(12)-Holliday junction (HJ) complex. HJ DNA is sandwiched between 2 RuvA tetramers; dsDNA enters through RuvA and exits via RuvB. An RuvB hexamer assembles on each DNA strand where it exits the tetramer. Each RuvB hexamer is contacted by two RuvA subunits (via domain III) on 2 adjacent RuvB subunits; this complex drives branch migration. In the full resolvosome a probable DNA-RuvA(4)-RuvB(12)-RuvC(2) complex forms which resolves the HJ.

Its subcellular location is the cytoplasm. It catalyses the reaction ATP + H2O = ADP + phosphate + H(+). Functionally, the RuvA-RuvB-RuvC complex processes Holliday junction (HJ) DNA during genetic recombination and DNA repair, while the RuvA-RuvB complex plays an important role in the rescue of blocked DNA replication forks via replication fork reversal (RFR). RuvA specifically binds to HJ cruciform DNA, conferring on it an open structure. The RuvB hexamer acts as an ATP-dependent pump, pulling dsDNA into and through the RuvAB complex. RuvB forms 2 homohexamers on either side of HJ DNA bound by 1 or 2 RuvA tetramers; 4 subunits per hexamer contact DNA at a time. Coordinated motions by a converter formed by DNA-disengaged RuvB subunits stimulates ATP hydrolysis and nucleotide exchange. Immobilization of the converter enables RuvB to convert the ATP-contained energy into a lever motion, pulling 2 nucleotides of DNA out of the RuvA tetramer per ATP hydrolyzed, thus driving DNA branch migration. The RuvB motors rotate together with the DNA substrate, which together with the progressing nucleotide cycle form the mechanistic basis for DNA recombination by continuous HJ branch migration. Branch migration allows RuvC to scan DNA until it finds its consensus sequence, where it cleaves and resolves cruciform DNA. This Pseudomonas fluorescens (strain ATCC BAA-477 / NRRL B-23932 / Pf-5) protein is Holliday junction branch migration complex subunit RuvB.